Here is a 169-residue protein sequence, read N- to C-terminus: Translationally-controlled tumor protein homolog (169 aa).

Positions 1–169 constitute a TCTP domain; the sequence is MIIYKDIVSG…FKDGLEEEKF (169 aa).

It belongs to the TCTP family.

It is found in the cytoplasm. Functionally, involved in calcium binding and microtubule stabilization. This Branchiostoma belcheri (Amphioxus) protein is Translationally-controlled tumor protein homolog.